The chain runs to 122 residues: UPF0102 protein CTC_01256 (122 aa).

It belongs to the UPF0102 family.

The sequence is that of UPF0102 protein CTC_01256 from Clostridium tetani (strain Massachusetts / E88).